The sequence spans 320 residues: Zinc finger protein 330 (320 aa).

Positions 1-23 (MPKKKTGARKKAENRREREKQLR) are disordered. The short motif at 3–11 (KKKTGARKK) is the Nuclear localization signal element. Residues 10-22 (KKAENRREREKQL) show a composition bias toward basic and acidic residues. 4 C4-type zinc fingers span residues 42–58 (CDKCQRRQKNRAFCYFC), 67–104 (CAQCGKTKCMMKSSDCVIKHAGVYSTGLAMVGAICDFC), 129–149 (CVECERGVWDHGGRIFSCSFC), and 175–189 (CVSCNRLGQHSCLRC). 2 disordered regions span residues 206 to 250 (EKGK…ASGY) and 264 to 303 (GASYHDEEEDEYEAEDDEEEEDEGGKDSDAESSDLFTNLN). Basic and acidic residues predominate over residues 216–225 (CGHETQETKD). Acidic residues predominate over residues 269 to 287 (DEEEDEYEAEDDEEEEDEG). S291 is modified (phosphoserine).

It belongs to the NOA36 family.

It is found in the nucleus. The protein localises to the nucleolus. The protein resides in the chromosome. It localises to the centromere. This Bos taurus (Bovine) protein is Zinc finger protein 330 (ZNF330).